Here is a 321-residue protein sequence, read N- to C-terminus: Glucokinase (321 aa).

8–13 (GDVGGT) contributes to the ATP binding site.

Belongs to the bacterial glucokinase family.

It is found in the cytoplasm. The enzyme catalyses D-glucose + ATP = D-glucose 6-phosphate + ADP + H(+). The protein is Glucokinase of Escherichia coli O127:H6 (strain E2348/69 / EPEC).